Here is a 132-residue protein sequence, read N- to C-terminus: Small ribosomal subunit protein uS9 (132 aa).

The protein belongs to the universal ribosomal protein uS9 family.

This chain is Small ribosomal subunit protein uS9, found in Leptospira borgpetersenii serovar Hardjo-bovis (strain JB197).